The sequence spans 289 residues: Type II methyltransferase M.MjaIII (289 aa).

S-adenosyl-L-methionine-binding residues include W9, K13, D63, and D199.

It belongs to the N(4)/N(6)-methyltransferase family.

It catalyses the reaction a 2'-deoxyadenosine in DNA + S-adenosyl-L-methionine = an N(6)-methyl-2'-deoxyadenosine in DNA + S-adenosyl-L-homocysteine + H(+). Its function is as follows. An alpha subtype methylase that recognizes the double-stranded sequence 5'-GATC-3', methylates A-2 on both strands, and protects the DNA from cleavage by the MjaIII endonuclease. The protein is Type II methyltransferase M.MjaIII (mjaIIIM) of Methanocaldococcus jannaschii (strain ATCC 43067 / DSM 2661 / JAL-1 / JCM 10045 / NBRC 100440) (Methanococcus jannaschii).